The sequence spans 264 residues: Small ribosomal subunit protein eS1 (264 aa).

Residues 232–264 form a disordered region; sequence HGEGGGSGKPSGDETGAKVERADGYEPPVQESV. Residues 242-255 show a composition bias toward basic and acidic residues; the sequence is SGDETGAKVERADG.

Belongs to the eukaryotic ribosomal protein eS1 family. Component of the small ribosomal subunit. Mature ribosomes consist of a small (40S) and a large (60S) subunit. The 40S subunit contains about 33 different proteins and 1 molecule of RNA (18S). The 60S subunit contains about 49 different proteins and 3 molecules of RNA (28S, 5.8S and 5S). Part of the small subunit (SSU) processome, composed of more than 70 proteins and the RNA chaperone small nucleolar RNA (snoRNA) U3.

The protein resides in the cytoplasm. Its subcellular location is the nucleus. The protein localises to the nucleolus. Its function is as follows. Component of the small ribosomal subunit. The ribosome is a large ribonucleoprotein complex responsible for the synthesis of proteins in the cell. Part of the small subunit (SSU) processome, first precursor of the small eukaryotic ribosomal subunit. During the assembly of the SSU processome in the nucleolus, many ribosome biogenesis factors, an RNA chaperone and ribosomal proteins associate with the nascent pre-rRNA and work in concert to generate RNA folding, modifications, rearrangements and cleavage as well as targeted degradation of pre-ribosomal RNA by the RNA exosome. May play a role during erythropoiesis. The polypeptide is Small ribosomal subunit protein eS1 (Ophiophagus hannah (King cobra)).